The chain runs to 484 residues: tRNA sulfurtransferase (484 aa).

A THUMP domain is found at Q63–Q167. ATP contacts are provided by residues L185–M186, K267, G289, and Q298. C346 and C457 are joined by a disulfide. Positions A405–P483 constitute a Rhodanese domain. C457 functions as the Cysteine persulfide intermediate in the catalytic mechanism.

The protein belongs to the ThiI family.

Its subcellular location is the cytoplasm. The catalysed reaction is [ThiI sulfur-carrier protein]-S-sulfanyl-L-cysteine + a uridine in tRNA + 2 reduced [2Fe-2S]-[ferredoxin] + ATP + H(+) = [ThiI sulfur-carrier protein]-L-cysteine + a 4-thiouridine in tRNA + 2 oxidized [2Fe-2S]-[ferredoxin] + AMP + diphosphate. The enzyme catalyses [ThiS sulfur-carrier protein]-C-terminal Gly-Gly-AMP + S-sulfanyl-L-cysteinyl-[cysteine desulfurase] + AH2 = [ThiS sulfur-carrier protein]-C-terminal-Gly-aminoethanethioate + L-cysteinyl-[cysteine desulfurase] + A + AMP + 2 H(+). Its pathway is cofactor biosynthesis; thiamine diphosphate biosynthesis. Its function is as follows. Catalyzes the ATP-dependent transfer of a sulfur to tRNA to produce 4-thiouridine in position 8 of tRNAs, which functions as a near-UV photosensor. Also catalyzes the transfer of sulfur to the sulfur carrier protein ThiS, forming ThiS-thiocarboxylate. This is a step in the synthesis of thiazole, in the thiamine biosynthesis pathway. The sulfur is donated as persulfide by IscS. The chain is tRNA sulfurtransferase from Pseudomonas syringae pv. syringae (strain B728a).